The following is a 1073-amino-acid chain: DNA-directed RNA polymerase subunit beta (1073 aa).

Belongs to the RNA polymerase beta chain family. In plastids the minimal PEP RNA polymerase catalytic core is composed of four subunits: alpha, beta, beta', and beta''. When a (nuclear-encoded) sigma factor is associated with the core the holoenzyme is formed, which can initiate transcription.

The protein localises to the plastid. Its subcellular location is the chloroplast. It carries out the reaction RNA(n) + a ribonucleoside 5'-triphosphate = RNA(n+1) + diphosphate. In terms of biological role, DNA-dependent RNA polymerase catalyzes the transcription of DNA into RNA using the four ribonucleoside triphosphates as substrates. The polypeptide is DNA-directed RNA polymerase subunit beta (Aethionema cordifolium (Lebanon stonecress)).